The primary structure comprises 282 residues: ATP synthase gamma chain (282 aa).

It belongs to the ATPase gamma chain family. As to quaternary structure, F-type ATPases have 2 components, CF(1) - the catalytic core - and CF(0) - the membrane proton channel. CF(1) has five subunits: alpha(3), beta(3), gamma(1), delta(1), epsilon(1). CF(0) has three main subunits: a, b and c.

It localises to the cell membrane. Its function is as follows. Produces ATP from ADP in the presence of a proton gradient across the membrane. The gamma chain is believed to be important in regulating ATPase activity and the flow of protons through the CF(0) complex. This Clostridium botulinum (strain Okra / Type B1) protein is ATP synthase gamma chain.